Consider the following 104-residue polypeptide: Large ribosomal subunit protein bL21 (104 aa).

It belongs to the bacterial ribosomal protein bL21 family. As to quaternary structure, part of the 50S ribosomal subunit. Contacts protein L20.

This protein binds to 23S rRNA in the presence of protein L20. The polypeptide is Large ribosomal subunit protein bL21 (Francisella philomiragia subsp. philomiragia (strain ATCC 25017 / CCUG 19701 / FSC 153 / O#319-036)).